We begin with the raw amino-acid sequence, 311 residues long: Dof zinc finger protein DOF1.4 (311 aa).

The span at 1-12 shows a compositional bias: polar residues; the sequence is MQSKNMIVASSH. The tract at residues 1 to 29 is disordered; the sequence is MQSKNMIVASSHQQQQQQQPQQPQPQLKC. A compositionally biased stretch (low complexity) spans 13–26; the sequence is QQQQQQQPQQPQPQ. The Dof-type zinc finger occupies 27–81; it reads LKCPRCDSSNTKFCYYNNYSLSQPRHFCKACKRYWTRGGTLRNVPVGGSYRKNKR. Residues Cys29, Cys32, Cys54, and Cys57 each coordinate Zn(2+). The disordered stretch occupies residues 72–110; sequence VGGSYRKNKRVKRPSTATTTTASTVSTTNSSSPNNPHQI. The segment covering 85–107 has biased composition (low complexity); that stretch reads PSTATTTTASTVSTTNSSSPNNP.

The protein resides in the nucleus. Its function is as follows. Transcription factor that binds specifically to a 5'-AA[AG]G-3' consensus core sequence. This Arabidopsis thaliana (Mouse-ear cress) protein is Dof zinc finger protein DOF1.4 (DOF1.4).